We begin with the raw amino-acid sequence, 320 residues long: Transmembrane protein 41 homolog (320 aa).

A disordered region spans residues 20–72 (GRAKALQEHSPDQVATPLLPQVPPQEQQDLNPQQQQQQQQQQQATPQKQAMSA). A compositionally biased stretch (low complexity) spans 43–68 (PQEQQDLNPQQQQQQQQQQQATPQKQ). Helical transmembrane passes span 83–103 (VIVAGIFVASLVTMCYVYAIF), 141–161 (VMFGVVVAYVFLQTFAIPGSL), 173–195 (FPIALFLICFCSALGATLCYTLS), 225–242 (LFNYMLFLRMTPILPNWF), 245–265 (LASPVIGVPLHIFALGTFCGV), and 289–309 (FSWTSMGILMACACASLLPGL).

This sequence belongs to the TMEM41 family. In terms of tissue distribution, in embryos, strongly expressed in the nervous system.

Its subcellular location is the membrane. Functionally, required in cholinergic neurons, but not in motor neurons, for normal neurotransmitter release by motor neurons. Involved in muscle growth. This is Transmembrane protein 41 homolog (stas) from Drosophila melanogaster (Fruit fly).